The chain runs to 915 residues: Transferrin-binding protein A (915 aa).

The signal sequence occupies residues 1-24 (MQQQHLFRFNILCLSLMTALPAYA). The Periplasmic portion of the chain corresponds to 25–187 (ENVQAGQAQE…ADDVIGEGRQ (163 aa)). The short motif at 38 to 45 (DTIQVKAK) is the TonB box element. Positions 51–176 (RDNEVTGLGK…LAGSVAFQTK (126 aa)) constitute a TBDR plug domain. The tract at residues 121–139 (SYTAQAALGGTRTAGSSGA) is plug loop, interacts with transferrin. Residues 187 to 915 (QWGIQSKTAY…NYTFSLEMKF (729 aa)) form the TBDR beta-barrel domain. Residues 188 to 197 (WGIQSKTAYS) form a beta stranded membrane-spanning segment. Residues 198 to 203 (GKNRGL) are Extracellular-facing. The chain crosses the membrane as a beta stranded span at residues 204–213 (TQSIALAGRI). The Periplasmic segment spans residues 214-215 (GG). A beta stranded transmembrane segment spans residues 216 to 225 (AEALLIHTGR). Topologically, residues 226-309 (RAGEIRAHED…FLADPLSYES (84 aa)) are extracellular. Residues 310–319 (RSWLFRPGFR) form a beta stranded membrane-spanning segment. The Periplasmic segment spans residues 320–324 (FENKR). Residues 325–334 (HYIGGILEHT) traverse the membrane as a beta stranded segment. Residues 335–406 (QQTFDTRDMT…VFYDETHTKS (72 aa)) lie on the Extracellular side of the membrane. The segment at 351-361 (KAVFDANKKQA) is L3 helix finger, interacts with transferrin. The beta stranded transmembrane segment at 407 to 415 (RYGLEYVYT) threads the bilayer. At 416 to 423 (NADKDTWA) the chain is on the periplasmic side. Residues 424 to 433 (DYARLSYDRQ) traverse the membrane as a beta stranded segment. Residues 434-478 (GIGLDNHFQQTHCSADGSDKYCRPSADKPFSYYKSDRVIYGESHR) lie on the Extracellular side of the membrane. Residues 479–488 (LLQAAFKKSF) traverse the membrane as a beta stranded segment. Over 489-494 (DTAKIR) the chain is Periplasmic. The beta stranded transmembrane segment at 495 to 504 (HNLSVNLGFD) threads the bilayer. The Extracellular portion of the chain corresponds to 505 to 583 (RFGSNLRHQD…PRSINGKSYY (79 aa)). Residues 523–542 (AYSSNTPPQNNGKKISPNGS) are disordered. Residues 584–592 (AAVRDNVRL) form a beta stranded membrane-spanning segment. The Periplasmic portion of the chain corresponds to 593 to 594 (GR). The beta stranded transmembrane segment at 595-603 (WADVGAGLR) threads the bilayer. Topologically, residues 604-623 (YDYRSTHSDDGSVSTGTHRT) are extracellular. A beta stranded membrane pass occupies residues 624 to 633 (LSWNAGIVLK). Topologically, residues 634–637 (PTDW) are periplasmic. Residues 638–647 (LDLTYRTSTG) form a beta stranded membrane-spanning segment. Topologically, residues 648–675 (FRLPSFAEMYGWRAGVQSKAVKIDPEKS) are extracellular. Residues 676–685 (FNKEAGIVFK) form a beta stranded membrane-spanning segment. The Periplasmic segment spans residues 686–689 (GDFG). The chain crosses the membrane as a beta stranded span at residues 690–699 (NLEASWFNNA). At 700-733 (YRDLIVRGYEAQIKDGKEEAKGDPAYLNAQSARI) the chain is on the extracellular side. A beta stranded transmembrane segment spans residues 734–743 (TGINILGKID). At 744-755 (WNGVWDKLPEGW) the chain is on the periplasmic side. A beta stranded transmembrane segment spans residues 756-765 (YSTFAYNRVR). The Extracellular segment spans residues 766–790 (VRDIKKRADRTDIQSHLFDAIQPSR). A beta stranded transmembrane segment spans residues 791-799 (YVVGLGYDQ). At 800–802 (PEG) the chain is on the periplasmic side. Residues 803–811 (KWGVNGMLT) form a beta stranded membrane-spanning segment. Residues 812 to 845 (YSKAKEITELLGSRALLNGNSRNTKATARRTRPW) are Extracellular-facing. The beta stranded transmembrane segment at 846-855 (YIVDVSGYYT) threads the bilayer. The Periplasmic portion of the chain corresponds to 856 to 860 (VKKHF). Residues 861–870 (TLRAGVYNLL) traverse the membrane as a beta stranded segment. At 871–905 (NYRYVTWENVRQTAGGAVNQHKNVGVYNRYAAPGR) the chain is on the extracellular side. A TonB C-terminal box motif is present at residues 898-915 (NRYAAPGRNYTFSLEMKF). The beta stranded transmembrane segment at 906–915 (NYTFSLEMKF) threads the bilayer.

This sequence belongs to the TonB-dependent receptor family. In terms of assembly, binds both human apo- and holo-transferrin (TF), via the TF C-terminus. Forms a large complex with TF and TbpB.

It is found in the cell outer membrane. In terms of biological role, neisseria acquires iron by extracting it from serum transferrin (TF) in its human host. Acts as a TF receptor and is required for TF utilization. Binds both apo- and holo-TF, via the TF C-terminus. In Neisseria meningitidis serogroup B (strain ATCC BAA-335 / MC58), this protein is Transferrin-binding protein A.